A 153-amino-acid chain; its full sequence is 6,7-dimethyl-8-ribityllumazine synthase (153 aa).

5-amino-6-(D-ribitylamino)uracil contacts are provided by residues F21, 55–57 (AFE), and 79–81 (TVI). A (2S)-2-hydroxy-3-oxobutyl phosphate-binding site is contributed by 84-85 (AT). The active-site Proton donor is H87. F112 is a 5-amino-6-(D-ribitylamino)uracil binding site. R126 contributes to the (2S)-2-hydroxy-3-oxobutyl phosphate binding site.

The protein belongs to the DMRL synthase family. In terms of assembly, forms an icosahedral capsid composed of 60 subunits, arranged as a dodecamer of pentamers.

It carries out the reaction (2S)-2-hydroxy-3-oxobutyl phosphate + 5-amino-6-(D-ribitylamino)uracil = 6,7-dimethyl-8-(1-D-ribityl)lumazine + phosphate + 2 H2O + H(+). The protein operates within cofactor biosynthesis; riboflavin biosynthesis; riboflavin from 2-hydroxy-3-oxobutyl phosphate and 5-amino-6-(D-ribitylamino)uracil: step 1/2. Its function is as follows. Catalyzes the formation of 6,7-dimethyl-8-ribityllumazine by condensation of 5-amino-6-(D-ribitylamino)uracil with 3,4-dihydroxy-2-butanone 4-phosphate. This is the penultimate step in the biosynthesis of riboflavin. The protein is 6,7-dimethyl-8-ribityllumazine synthase of Bacillus cereus (strain G9842).